Consider the following 659-residue polypeptide: Threonine--tRNA ligase (659 aa).

In terms of domain architecture, TGS spans 1–61 (MSAVPELRIT…ADGDVVEEIR (61 aa)). A catalytic region spans residues 260–555 (DHRKLGVELD…LLEHYAGAFP (296 aa)). 3 residues coordinate Zn(2+): cysteine 353, histidine 404, and histidine 532.

It belongs to the class-II aminoacyl-tRNA synthetase family. In terms of assembly, homodimer. Requires Zn(2+) as cofactor.

It localises to the cytoplasm. The enzyme catalyses tRNA(Thr) + L-threonine + ATP = L-threonyl-tRNA(Thr) + AMP + diphosphate + H(+). Functionally, catalyzes the attachment of threonine to tRNA(Thr) in a two-step reaction: L-threonine is first activated by ATP to form Thr-AMP and then transferred to the acceptor end of tRNA(Thr). Also edits incorrectly charged L-seryl-tRNA(Thr). The chain is Threonine--tRNA ligase from Thermobifida fusca (strain YX).